The following is a 79-amino-acid chain: Cytochrome b (79 aa).

The next 3 membrane-spanning stretches (helical) occupy residues 1–7 (TALLLAA), 31–52 (WLIRNLHANGASFFFICIYLHI), and 67–79 (WNIGVILLLTLMA). Heme b contacts are provided by histidine 37 and histidine 51.

It belongs to the cytochrome b family. In terms of assembly, the cytochrome bc1 complex contains 11 subunits: 3 respiratory subunits (MT-CYB, CYC1 and UQCRFS1), 2 core proteins (UQCRC1 and UQCRC2) and 6 low-molecular weight proteins (UQCRH/QCR6, UQCRB/QCR7, UQCRQ/QCR8, UQCR10/QCR9, UQCR11/QCR10 and a cleavage product of UQCRFS1). This cytochrome bc1 complex then forms a dimer. The cofactor is heme b.

The protein localises to the mitochondrion inner membrane. Component of the ubiquinol-cytochrome c reductase complex (complex III or cytochrome b-c1 complex) that is part of the mitochondrial respiratory chain. The b-c1 complex mediates electron transfer from ubiquinol to cytochrome c. Contributes to the generation of a proton gradient across the mitochondrial membrane that is then used for ATP synthesis. The protein is Cytochrome b (MT-CYB) of Pomatostomus superciliosus (White-browed babbler).